Here is a 154-residue protein sequence, read N- to C-terminus: MGRIIFVSFGLLVVFLSLSGTGADCPSDWSSDEEHCYYVFFLLFTWEEAAKFCTQQANGGHLVSIESVEEAEFVAQLISENIKTSADYVWIGLWNQRKAPYCVSKWTDGSSVIYKNVIERFIKNCFGLEKETNYRTWFNLSCGDDYPFVCKSPA.

Residues 1-23 (MGRIIFVSFGLLVVFLSLSGTGA) form the signal peptide. 3 disulfides stabilise this stretch: cysteine 25–cysteine 36, cysteine 53–cysteine 150, and cysteine 125–cysteine 142. One can recognise a C-type lectin domain in the interval 32–151 (DEEHCYYVFF…CGDDYPFVCK (120 aa)). Asparagine 139 carries N-linked (GlcNAc...) asparagine glycosylation.

As to quaternary structure, heterodimer with the alpha subunit (AC W5XDM0); disulfide-linked. As to expression, expressed by the venom gland.

It localises to the secreted. Inhibits human breast cancer cells (MDA-MB231) migration and proliferation, as well as their adhesion to fibrinogen and fibronectin. This inhibition may be due to the binding to receptors of the integrin family, probably alpha-v/beta-3 (ITGAV/ITGB3) (40% inhibition of cell adhesion) and alpha-5/beta-1 (ITGA5/ITGB1) (by comparison with lebectin). The chain is Snaclec lebecin subunit beta from Macrovipera lebetinus (Levantine viper).